We begin with the raw amino-acid sequence, 610 residues long: Butyryl-CoA dehydrogenase Swol_1933 (610 aa).

Catalysis depends on E451, which acts as the Proton acceptor.

The protein belongs to the acyl-CoA dehydrogenase family. Requires FAD as cofactor.

Its subcellular location is the cytoplasm. It carries out the reaction butanoyl-CoA + oxidized [electron-transfer flavoprotein] + H(+) = (2E)-butenoyl-CoA + reduced [electron-transfer flavoprotein]. The catalysed reaction is a short-chain 2,3-saturated fatty acyl-CoA + oxidized [electron-transfer flavoprotein] + H(+) = a short-chain (2E)-enoyl-CoA + reduced [electron-transfer flavoprotein]. The protein operates within lipid metabolism; butanoate metabolism. Its function is as follows. Involved in syntrophic growth of S.wolfei with butyrate, as part of the butyrate oxidation pathway. Catalyzes the oxidation of butanoyl-CoA to crotonyl-CoA. Probably passes the electrons released by this reaction on to electron-transfer flavoproteins (EtfAB) to finally generate hydrogen and/or formate. This is Butyryl-CoA dehydrogenase Swol_1933 from Syntrophomonas wolfei subsp. wolfei (strain DSM 2245B / Goettingen).